The chain runs to 692 residues: Elongation factor G (692 aa).

The region spanning Glu8 to Thr282 is the tr-type G domain. GTP is bound by residues Ala17–Thr24, Asp81–His85, and Asn135–Asp138.

It belongs to the TRAFAC class translation factor GTPase superfamily. Classic translation factor GTPase family. EF-G/EF-2 subfamily.

The protein localises to the cytoplasm. Catalyzes the GTP-dependent ribosomal translocation step during translation elongation. During this step, the ribosome changes from the pre-translocational (PRE) to the post-translocational (POST) state as the newly formed A-site-bound peptidyl-tRNA and P-site-bound deacylated tRNA move to the P and E sites, respectively. Catalyzes the coordinated movement of the two tRNA molecules, the mRNA and conformational changes in the ribosome. The chain is Elongation factor G from Moorella thermoacetica (strain ATCC 39073 / JCM 9320).